The sequence spans 141 residues: Large ribosomal subunit protein uL22 (141 aa).

Residues 110–141 are disordered; that stretch reads EEKKTVAKKTTTTKAPAKKTTSTKKATAKKES. The span at 117-134 shows a compositional bias: low complexity; the sequence is KKTTTTKAPAKKTTSTKK.

This sequence belongs to the universal ribosomal protein uL22 family. Part of the 50S ribosomal subunit.

This protein binds specifically to 23S rRNA; its binding is stimulated by other ribosomal proteins, e.g. L4, L17, and L20. It is important during the early stages of 50S assembly. It makes multiple contacts with different domains of the 23S rRNA in the assembled 50S subunit and ribosome. Its function is as follows. The globular domain of the protein is located near the polypeptide exit tunnel on the outside of the subunit, while an extended beta-hairpin is found that lines the wall of the exit tunnel in the center of the 70S ribosome. The protein is Large ribosomal subunit protein uL22 of Campylobacter jejuni subsp. doylei (strain ATCC BAA-1458 / RM4099 / 269.97).